Reading from the N-terminus, the 430-residue chain is Centrosomal protein CEP57L1 (430 aa).

At Ser45 the chain carries Phosphoserine. Residues Pro46–Ala213 adopt a coiled-coil conformation. Disordered regions lie at residues Cys248 to Phe290 and Arg362 to Gln430. 3 stretches are compositionally biased toward basic and acidic residues: residues Leu249–Pro272, Arg362–Arg372, and Leu421–Gln430. Residues Phe290 to Ser377 adopt a coiled-coil conformation.

This sequence belongs to the translokin family.

It is found in the cytoplasm. It localises to the cytoskeleton. The protein localises to the microtubule organizing center. The protein resides in the centrosome. Functionally, centrosomal protein which may be required for microtubule attachment to centrosomes. The protein is Centrosomal protein CEP57L1 (Cep57l1) of Rattus norvegicus (Rat).